Consider the following 211-residue polypeptide: Thymidylate kinase (211 aa).

Residue 7-14 participates in ATP binding; the sequence is GIDGCGKT.

Belongs to the thymidylate kinase family.

It catalyses the reaction dTMP + ATP = dTDP + ADP. Its function is as follows. Phosphorylation of dTMP to form dTDP in both de novo and salvage pathways of dTTP synthesis. This is Thymidylate kinase from Anaplasma marginale (strain Florida).